We begin with the raw amino-acid sequence, 67 residues long: MPADRLTTLEIRAAEQERTIEELSGQIAEQWTVIERMQRKLDALTDRFLALEEQAAPDVPVTKPPHW.

This sequence belongs to the SlyX family.

This chain is Protein SlyX homolog, found in Mesorhizobium japonicum (strain LMG 29417 / CECT 9101 / MAFF 303099) (Mesorhizobium loti (strain MAFF 303099)).